Consider the following 335-residue polypeptide: MAEKIAVIGAGSWGTTLADLLAKKGHEVTLWAYEPELVLEMRDNRENSLFLPGIKLNERLAFTNDLAEAYRGCSMVLCVVPSQLVRRVMTNSLPFLPKEAIIVSASKGIEVDTLATVSEIYQEILPPEQFQVLAALSGPSFAREVALEMPTAVTAAASSEAVARRVQEAFTTDYFRVYRNSDVVGVELGGAIKNVIAIAAGISDGLGFGSNTRAALITRGLAEMTRLGVAMGAQPSTFAGLAGMGDLVLTCTGDLSRNRSVGIQIGQGRTLSEILGEMRMVAEGVKTTESAYNLAKKLGVEMPIIEQMYQMLYQNKSAREAVLELMTRNLKAEGV.

Positions 12, 13, and 107 each coordinate NADPH. The sn-glycerol 3-phosphate site is built by Lys107, Gly138, and Ser140. Position 142 (Ala142) interacts with NADPH. Residues Lys193, Asp246, Ser256, Arg257, and Asn258 each coordinate sn-glycerol 3-phosphate. The active-site Proton acceptor is Lys193. NADPH is bound at residue Arg257. Positions 281 and 283 each coordinate NADPH.

This sequence belongs to the NAD-dependent glycerol-3-phosphate dehydrogenase family.

It is found in the cytoplasm. The catalysed reaction is sn-glycerol 3-phosphate + NAD(+) = dihydroxyacetone phosphate + NADH + H(+). It carries out the reaction sn-glycerol 3-phosphate + NADP(+) = dihydroxyacetone phosphate + NADPH + H(+). It functions in the pathway membrane lipid metabolism; glycerophospholipid metabolism. Catalyzes the reduction of the glycolytic intermediate dihydroxyacetone phosphate (DHAP) to sn-glycerol 3-phosphate (G3P), the key precursor for phospholipid synthesis. This is Glycerol-3-phosphate dehydrogenase [NAD(P)+] from Citrifermentans bemidjiense (strain ATCC BAA-1014 / DSM 16622 / JCM 12645 / Bem) (Geobacter bemidjiensis).